Consider the following 507-residue polypeptide: Maturase K (507 aa).

Belongs to the intron maturase 2 family. MatK subfamily.

The protein resides in the plastid. It is found in the chloroplast. Functionally, usually encoded in the trnK tRNA gene intron. Probably assists in splicing its own and other chloroplast group II introns. This is Maturase K from Lyonia ligustrina (Maleberry).